Consider the following 217-residue polypeptide: Oxygen regulatory protein NreC (217 aa).

A Response regulatory domain is found at 2-119 (KIVIADDHAV…QLISAVRTVY (118 aa)). D53 is modified (4-aspartylphosphate). The region spanning 148 to 213 (TNDPFRILSK…ELVEYALKKK (66 aa)) is the HTH luxR-type domain. The segment at residues 172–191 (NKEIAEKLFVSVKTVEAHKT) is a DNA-binding region (H-T-H motif).

Post-translationally, phosphorylated by NreB.

It localises to the cytoplasm. In terms of biological role, member of the two-component regulatory system NreB/NreC involved in the control of dissimilatory nitrate/nitrite reduction in response to oxygen. Phosphorylated NreC binds to a GC-rich palindromic sequence at the promoters of the nitrate (narGHJI) and nitrite (nir) reductase operons, as well as the putative nitrate transporter gene narT, and activates their expression. The chain is Oxygen regulatory protein NreC (nreC) from Staphylococcus carnosus (strain TM300).